Reading from the N-terminus, the 881-residue chain is Sodium/potassium/calcium exchanger Nckx30C (881 aa).

The Extracellular segment spans residues 1 to 194; sequence MLQPTTCSKQ…SRCRSRRCLR (194 aa). N-linked (GlcNAc...) asparagine glycosylation occurs at Asn69. 4 disordered regions span residues 79–111, 149–181, 215–255, and 272–315; these read DMLS…APSD, AKTR…LLHP, AAKP…TSGE, and GLEE…TTKT. Positions 85–95 are enriched in polar residues; that stretch reads RSRSSSTTIDF. Over residues 149–175 the composition is skewed to low complexity; that stretch reads AKTRSRTAAQLPATSAASATSSRGASA. The helical transmembrane segment at 195–215 threads the bilayer; it reads LPIYSILLLCLTTQGLGLGDA. Over 216–330 the chain is Cytoplasmic; it reads AKPRPAKQHF…DLFTKEQLEN (115 aa). Over residues 228 to 240 the composition is skewed to low complexity; that stretch reads SNSNSPNQNQNHN. The segment covering 296-315 has biased composition (polar residues); sequence AGNQRGINDTHNDNSTTTKT. The chain crosses the membrane as a helical span at residues 331 to 351; it reads GAVILHIIGVIYMFVALAIVC. The Extracellular portion of the chain corresponds to 352-375; sequence DEFFVPSLDVIIEKLGITDDVAGA. Residues 372-412 form an Alpha-1 repeat; the sequence is VAGATFMAAGGSAPELFTSVIGVFVSFDDVGIGTIVGSAVF. A helical membrane pass occupies residues 376-396; the sequence is TFMAAGGSAPELFTSVIGVFV. Residues 397-402 are Cytoplasmic-facing; that stretch reads SFDDVG. The chain crosses the membrane as a helical span at residues 403-423; it reads IGTIVGSAVFNILFVIGMCAL. Topologically, residues 424-433 are extracellular; it reads FSKTVLSLTW. A helical transmembrane segment spans residues 434–454; that stretch reads WPLFRDCSFYSISLLVLIYFF. Residues 455 to 458 lie on the Cytoplasmic side of the membrane; it reads RDNR. The chain crosses the membrane as a helical span at residues 459 to 479; sequence IFWWEALILFTIYIGYVAFMK. Topologically, residues 480-720 are extracellular; it reads WNVQVETCVK…PDTRTPRGKR (241 aa). Residues 508-565 form a disordered region; it reads PAGNAANSSETSMATQPGGSVTSRAASETRSGPPGSSNAGATGNSSGGGGTSGSTQTG. A compositionally biased stretch (polar residues) spans 512 to 537; that stretch reads AANSSETSMATQPGGSVTSRAASETR. 2 N-linked (GlcNAc...) asparagine glycosylation sites follow: Asn514 and Asn551. Residues 542 to 551 show a composition bias toward low complexity; that stretch reads GSSNAGATGN. The chain crosses the membrane as a helical span at residues 721-741; the sequence is FFPVTFIGSIVWIAAFSYLMV. Topologically, residues 742 to 756 are cytoplasmic; it reads WWANVAGDTARIPPE. Residues 757–777 form a helical membrane-spanning segment; that stretch reads VMGLTFLAAGTSIPDLITSVI. The stretch at 764-795 is one Alpha-2 repeat; sequence AAGTSIPDLITSVIVARKGFGDMAVSSSVGSN. Topologically, residues 778–795 are extracellular; sequence VARKGFGDMAVSSSVGSN. A helical membrane pass occupies residues 796-816; the sequence is IFDVTVGLPIPWLLYGIIYGA. Residues 817-822 lie on the Cytoplasmic side of the membrane; that stretch reads PVEVNS. A helical membrane pass occupies residues 823–843; it reads VGMVCSITILFMMLVFVVMSI. Over 844 to 852 the chain is Extracellular; it reads ACFRWRMNK. A helical transmembrane segment spans residues 853 to 873; sequence GLGFTMFLLYFAFVAVSLMFE. Residues 874-881 are Cytoplasmic-facing; sequence YDVITCPF.

This sequence belongs to the Ca(2+):cation antiporter (CaCA) (TC 2.A.19) family. SLC24A subfamily. As to expression, expressed in the adult nervous system. Expressed in the photoreceptor cells as well as in the lamina, medulla, and optic lobes of the brain.

Its subcellular location is the membrane. Its function is as follows. May function in the removal and maintenance of calcium homeostasis during signaling in the adult and in signaling events during embryogenesis and patterning of imaginal disks. Transports one Ca(2+) and 1 K(+) in exchange for 4 Na(+). The polypeptide is Sodium/potassium/calcium exchanger Nckx30C (Nckx30C) (Drosophila melanogaster (Fruit fly)).